Reading from the N-terminus, the 73-residue chain is Sec-independent protein translocase protein TatA (73 aa).

A helical membrane pass occupies residues 1 to 21 (MGSFSIGHWLIVLAIIVLLFG). Residues 43–73 (MEDTTPEKSEKVEHKEESATSQKIEETTKNA) form a disordered region.

Belongs to the TatA/E family. In terms of assembly, the Tat system comprises two distinct complexes: a TatABC complex, containing multiple copies of TatA, TatB and TatC subunits, and a separate TatA complex, containing only TatA subunits. Substrates initially bind to the TatABC complex, which probably triggers association of the separate TatA complex to form the active translocon.

It localises to the cell inner membrane. Its function is as follows. Part of the twin-arginine translocation (Tat) system that transports large folded proteins containing a characteristic twin-arginine motif in their signal peptide across membranes. TatA could form the protein-conducting channel of the Tat system. The protein is Sec-independent protein translocase protein TatA of Campylobacter concisus (strain 13826).